The sequence spans 226 residues: UPF0758 protein SUB0843 (226 aa).

The region spanning Q103 to I225 is the MPN domain. Zn(2+) contacts are provided by H174, H176, and D187. A JAMM motif motif is present at residues H174–D187.

It belongs to the UPF0758 family.

In Streptococcus uberis (strain ATCC BAA-854 / 0140J), this protein is UPF0758 protein SUB0843.